A 727-amino-acid polypeptide reads, in one-letter code: Polyribonucleotide nucleotidyltransferase (727 aa).

Mg(2+) is bound by residues aspartate 488 and aspartate 494. Positions 555–614 constitute a KH domain; it reads PKLYTMKINPEKIRDVIGKGGATIRALTDETGCQINIEEDGTITIAATEAAKADEAKRRI. An S1 motif domain is found at 624–692; it reads GKIYEGPVTK…DKGRVKLSMK (69 aa). The tract at residues 691–727 is disordered; it reads MKALADRPAGDSGRPAPAERGERRERRDGGASEQQQQ. The segment covering 707–720 has biased composition (basic and acidic residues); that stretch reads PAERGERRERRDGG.

The protein belongs to the polyribonucleotide nucleotidyltransferase family. It depends on Mg(2+) as a cofactor.

Its subcellular location is the cytoplasm. The catalysed reaction is RNA(n+1) + phosphate = RNA(n) + a ribonucleoside 5'-diphosphate. Involved in mRNA degradation. Catalyzes the phosphorolysis of single-stranded polyribonucleotides processively in the 3'- to 5'-direction. This Acidovorax sp. (strain JS42) protein is Polyribonucleotide nucleotidyltransferase.